The chain runs to 526 residues: Bifunctional purine biosynthesis protein PurH (526 aa).

The MGS-like domain maps to 1-145; sequence MSKAPLALLS…KNHAHVGIVT (145 aa).

Belongs to the PurH family.

The enzyme catalyses (6R)-10-formyltetrahydrofolate + 5-amino-1-(5-phospho-beta-D-ribosyl)imidazole-4-carboxamide = 5-formamido-1-(5-phospho-D-ribosyl)imidazole-4-carboxamide + (6S)-5,6,7,8-tetrahydrofolate. It carries out the reaction IMP + H2O = 5-formamido-1-(5-phospho-D-ribosyl)imidazole-4-carboxamide. It functions in the pathway purine metabolism; IMP biosynthesis via de novo pathway; 5-formamido-1-(5-phospho-D-ribosyl)imidazole-4-carboxamide from 5-amino-1-(5-phospho-D-ribosyl)imidazole-4-carboxamide (10-formyl THF route): step 1/1. The protein operates within purine metabolism; IMP biosynthesis via de novo pathway; IMP from 5-formamido-1-(5-phospho-D-ribosyl)imidazole-4-carboxamide: step 1/1. In Psychrobacter cryohalolentis (strain ATCC BAA-1226 / DSM 17306 / VKM B-2378 / K5), this protein is Bifunctional purine biosynthesis protein PurH.